We begin with the raw amino-acid sequence, 494 residues long: Succinoglycan biosynthesis transport protein ExoT (494 aa).

13 consecutive transmembrane segments (helical) span residues Trp16–Ala36, Phe44–Gly64, Ser82–Ala102, Leu105–Ile125, Leu157–Ala177, Phe215–Ile235, Phe253–Phe273, Leu297–Phe317, Trp321–Cys341, Thr343–Ile363, Ala384–Phe404, Pro421–Ala441, and Val447–Leu467.

It belongs to the polysaccharide synthase family.

The protein localises to the cell membrane. It participates in glycan metabolism; exopolysaccharide biosynthesis. The chain is Succinoglycan biosynthesis transport protein ExoT (exoT) from Rhizobium meliloti (strain 1021) (Ensifer meliloti).